The primary structure comprises 292 residues: Small ribosomal subunit protein uS2 (292 aa).

Residues 265 to 292 (TETALDWSDEPVAGDWAAEPAADAQGGW) are disordered. Over residues 277-292 (AGDWAAEPAADAQGGW) the composition is skewed to low complexity.

This sequence belongs to the universal ribosomal protein uS2 family. Component of the small ribosomal subunit. Mature ribosomes consist of a small (40S) and a large (60S) subunit. The 40S subunit contains about 33 different proteins and 1 molecule of RNA (18S). The 60S subunit contains about 49 different proteins and 3 molecules of RNA (25S, 5.8S and 5S). Interacts with RPS21.

The protein localises to the cytoplasm. Its function is as follows. Required for the assembly and/or stability of the 40S ribosomal subunit. Required for the processing of the 20S rRNA-precursor to mature 18S rRNA in a late step of the maturation of 40S ribosomal subunits. The protein is Small ribosomal subunit protein uS2 of Cryptococcus neoformans var. neoformans serotype D (strain B-3501A) (Filobasidiella neoformans).